A 441-amino-acid polypeptide reads, in one-letter code: Arginine biosynthesis bifunctional protein ArgJ, mitochondrial (441 aa).

A mitochondrion-targeting transit peptide spans 1 to 8 (MRISSTLL). Residues Thr-177, Lys-204, Thr-215, Glu-301, Asn-436, and Ser-441 each coordinate substrate. Thr-215 (nucleophile) is an active-site residue.

The protein belongs to the ArgJ family. As to quaternary structure, heterodimer of an alpha and a beta chain. Post-translationally, the alpha and beta chains are autoproteolytically processed from a single precursor protein within the mitochondrion.

The protein resides in the mitochondrion matrix. The enzyme catalyses N(2)-acetyl-L-ornithine + L-glutamate = N-acetyl-L-glutamate + L-ornithine. The catalysed reaction is L-glutamate + acetyl-CoA = N-acetyl-L-glutamate + CoA + H(+). Its pathway is amino-acid biosynthesis; L-arginine biosynthesis; L-ornithine and N-acetyl-L-glutamate from L-glutamate and N(2)-acetyl-L-ornithine (cyclic): step 1/1. It functions in the pathway amino-acid biosynthesis; L-arginine biosynthesis; N(2)-acetyl-L-ornithine from L-glutamate: step 1/4. Catalyzes two activities which are involved in the cyclic version of arginine biosynthesis: the synthesis of acetylglutamate from glutamate and acetyl-CoA, and of ornithine by transacetylation between acetylornithine and glutamate. In Saccharomyces cerevisiae (strain Lalvin EC1118 / Prise de mousse) (Baker's yeast), this protein is Arginine biosynthesis bifunctional protein ArgJ, mitochondrial.